We begin with the raw amino-acid sequence, 470 residues long: Ras-like GTPase HI_1637 (470 aa).

The short motif at 27–34 (GLSRSGKT) is the Walker A motif element. GTP contacts are provided by Ser-29, Gly-32, Lys-33, Thr-34, Ala-35, Trp-98, Ser-101, Thr-102, Arg-103, Lys-342, Asp-344, and His-345. Residues Gly-32, Lys-33, Thr-34, Ala-35, Trp-98, Ser-101, and Thr-102 each coordinate GDP. Residues Lys-342, Asp-344, His-345, Ala-383, and Val-384 each coordinate GDP. Val-384 is a binding site for GTP.

The protein to E.coli YcjX. As to quaternary structure, monomer in solution. The cofactor is Mg(2+).

It catalyses the reaction GTP + H2O = GDP + phosphate + H(+). Its activity is regulated as follows. Alternates between an inactive form bound to GDP and an active form bound to GTP. Likely activated by a guanine nucleotide-exchange factor (GEF). Its function is as follows. Binds GTP and GDP. Has intrinsic GTPase activity. Does not hydrolyze ATP. May act as a transducer of stress responses. The sequence is that of Ras-like GTPase HI_1637 from Haemophilus influenzae (strain ATCC 51907 / DSM 11121 / KW20 / Rd).